The following is a 78-amino-acid chain: Metallothionein-like protein type 2 (78 aa).

Belongs to the metallothionein superfamily. Type 15 family.

In terms of biological role, metallothioneins have a high content of cysteine residues that bind various heavy metals. The sequence is that of Metallothionein-like protein type 2 from Actinidia deliciosa (Kiwi).